The primary structure comprises 114 residues: Ribonuclease P protein component (114 aa).

Belongs to the RnpA family. In terms of assembly, consists of a catalytic RNA component (M1 or rnpB) and a protein subunit.

It catalyses the reaction Endonucleolytic cleavage of RNA, removing 5'-extranucleotides from tRNA precursor.. Its function is as follows. RNaseP catalyzes the removal of the 5'-leader sequence from pre-tRNA to produce the mature 5'-terminus. It can also cleave other RNA substrates such as 4.5S RNA. The protein component plays an auxiliary but essential role in vivo by binding to the 5'-leader sequence and broadening the substrate specificity of the ribozyme. The polypeptide is Ribonuclease P protein component (Clostridioides difficile (strain 630) (Peptoclostridium difficile)).